The primary structure comprises 82 residues: Small ribosomal subunit protein bS20 (82 aa).

Belongs to the bacterial ribosomal protein bS20 family.

Its function is as follows. Binds directly to 16S ribosomal RNA. The protein is Small ribosomal subunit protein bS20 of Streptococcus pyogenes serotype M12 (strain MGAS2096).